A 465-amino-acid chain; its full sequence is Iron-sulfur cluster assembly SufBD family protein SE_0610 (465 aa).

Belongs to the iron-sulfur cluster assembly SufBD family.

The polypeptide is Iron-sulfur cluster assembly SufBD family protein SE_0610 (Staphylococcus epidermidis (strain ATCC 12228 / FDA PCI 1200)).